A 503-amino-acid polypeptide reads, in one-letter code: ATP synthase subunit alpha (503 aa).

171–178 (DRQTGKTA) is an ATP binding site.

The protein belongs to the ATPase alpha/beta chains family. In terms of assembly, F-type ATPases have 2 components, CF(1) - the catalytic core - and CF(0) - the membrane proton channel. CF(1) has five subunits: alpha(3), beta(3), gamma(1), delta(1), epsilon(1). CF(0) has four main subunits: a(1), b(1), b'(1) and c(9-12).

Its subcellular location is the cellular thylakoid membrane. The catalysed reaction is ATP + H2O + 4 H(+)(in) = ADP + phosphate + 5 H(+)(out). Produces ATP from ADP in the presence of a proton gradient across the membrane. The alpha chain is a regulatory subunit. This Synechococcus sp. (strain PCC 6716) protein is ATP synthase subunit alpha.